Reading from the N-terminus, the 408-residue chain is Argininosuccinate synthase (408 aa).

Residues 12 to 20 (AYSGGLDTS) and alanine 39 contribute to the ATP site. Residues tyrosine 90 and serine 95 each coordinate L-citrulline. Glycine 120 contributes to the ATP binding site. 3 residues coordinate L-aspartate: threonine 122, asparagine 126, and aspartate 127. Position 126 (asparagine 126) interacts with L-citrulline. L-citrulline-binding residues include arginine 130, serine 181, serine 190, glutamate 266, and tyrosine 278.

This sequence belongs to the argininosuccinate synthase family. Type 1 subfamily. Homotetramer.

The protein localises to the cytoplasm. It catalyses the reaction L-citrulline + L-aspartate + ATP = 2-(N(omega)-L-arginino)succinate + AMP + diphosphate + H(+). The protein operates within amino-acid biosynthesis; L-arginine biosynthesis; L-arginine from L-ornithine and carbamoyl phosphate: step 2/3. This Methylococcus capsulatus (strain ATCC 33009 / NCIMB 11132 / Bath) protein is Argininosuccinate synthase.